The chain runs to 798 residues: PR domain zinc finger protein 4 (798 aa).

The 118-residue stretch at 408–525 (KQLVLRQSIV…PENELLFYYS (118 aa)) folds into the SET domain. C2H2-type zinc fingers lie at residues 586–608 (WKCS…FMGH), 614–636 (HKCD…LKIH), 642–664 (YRCT…MVIH), 670–692 (LKCD…VLIH), and 698–720 (IKCP…LNSH). The C2H2-type 6; degenerate zinc finger occupies 726–747 (YVCEKCTKAYLTKYHLTRHLKA). The segment at 750-798 (EPASSSSAQDDEDEDGDSGEDGLPGSMTTEGCRMSSAVYSADESLSAHK) is disordered. The segment covering 758 to 769 (QDDEDEDGDSGE) has biased composition (acidic residues).

It belongs to the class V-like SAM-binding methyltransferase superfamily.

The protein localises to the nucleus. Functionally, may function as a transcription factor involved in cell differentiation. In Rattus norvegicus (Rat), this protein is PR domain zinc finger protein 4 (Prdm4).